A 293-amino-acid chain; its full sequence is Ribosomal protein L11 methyltransferase (293 aa).

4 residues coordinate S-adenosyl-L-methionine: threonine 145, glycine 166, aspartate 188, and asparagine 230.

Belongs to the methyltransferase superfamily. PrmA family.

It is found in the cytoplasm. It catalyses the reaction L-lysyl-[protein] + 3 S-adenosyl-L-methionine = N(6),N(6),N(6)-trimethyl-L-lysyl-[protein] + 3 S-adenosyl-L-homocysteine + 3 H(+). Functionally, methylates ribosomal protein L11. The protein is Ribosomal protein L11 methyltransferase of Shewanella frigidimarina (strain NCIMB 400).